A 278-amino-acid polypeptide reads, in one-letter code: 4-hydroxy-tetrahydrodipicolinate reductase (278 aa).

Residues Gly13–Met18 and Gly111–Thr113 contribute to the NAD(+) site. His167 acts as the Proton donor/acceptor in catalysis. His168 serves as a coordination point for (S)-2,3,4,5-tetrahydrodipicolinate. Lys171 functions as the Proton donor in the catalytic mechanism. Gly177 to Thr178 contacts (S)-2,3,4,5-tetrahydrodipicolinate.

It belongs to the DapB family.

It localises to the cytoplasm. The catalysed reaction is (S)-2,3,4,5-tetrahydrodipicolinate + NAD(+) + H2O = (2S,4S)-4-hydroxy-2,3,4,5-tetrahydrodipicolinate + NADH + H(+). It catalyses the reaction (S)-2,3,4,5-tetrahydrodipicolinate + NADP(+) + H2O = (2S,4S)-4-hydroxy-2,3,4,5-tetrahydrodipicolinate + NADPH + H(+). It participates in amino-acid biosynthesis; L-lysine biosynthesis via DAP pathway; (S)-tetrahydrodipicolinate from L-aspartate: step 4/4. Functionally, catalyzes the conversion of 4-hydroxy-tetrahydrodipicolinate (HTPA) to tetrahydrodipicolinate. The sequence is that of 4-hydroxy-tetrahydrodipicolinate reductase from Trichormus variabilis (strain ATCC 29413 / PCC 7937) (Anabaena variabilis).